A 156-amino-acid polypeptide reads, in one-letter code: Small ribosomal subunit protein uS7 (156 aa).

This sequence belongs to the universal ribosomal protein uS7 family. Part of the 30S ribosomal subunit. Contacts proteins S9 and S11.

One of the primary rRNA binding proteins, it binds directly to 16S rRNA where it nucleates assembly of the head domain of the 30S subunit. Is located at the subunit interface close to the decoding center, probably blocks exit of the E-site tRNA. This is Small ribosomal subunit protein uS7 from Ralstonia nicotianae (strain ATCC BAA-1114 / GMI1000) (Ralstonia solanacearum).